A 128-amino-acid chain; its full sequence is Large ribosomal subunit protein bL19 (128 aa).

It belongs to the bacterial ribosomal protein bL19 family.

This protein is located at the 30S-50S ribosomal subunit interface and may play a role in the structure and function of the aminoacyl-tRNA binding site. This Caldicellulosiruptor bescii (strain ATCC BAA-1888 / DSM 6725 / KCTC 15123 / Z-1320) (Anaerocellum thermophilum) protein is Large ribosomal subunit protein bL19.